A 55-amino-acid chain; its full sequence is AFVINDSCVSCGACAGECPVSAITQGDTQFVIDADTCIDCGNCANVCPVGAPNQE.

4Fe-4S ferredoxin-type domains lie at 2 to 27 (FVINDSCVSCGACAGECPVSAITQGD) and 28 to 55 (TQFVIDADTCIDCGNCANVCPVGAPNQE). Residues C8, C11, C14, C18, C37, C40, C43, and C47 each contribute to the [4Fe-4S] cluster site.

The cofactor is [4Fe-4S] cluster.

In terms of biological role, ferredoxins are iron-sulfur proteins that transfer electrons in a wide variety of metabolic reactions. This chain is Ferredoxin, found in Clostridium butyricum.